We begin with the raw amino-acid sequence, 147 residues long: Peptide deformylase 1 (147 aa).

Fe cation-binding residues include Cys90 and His132. Residue Glu133 is part of the active site. His136 is a binding site for Fe cation.

The protein belongs to the polypeptide deformylase family. It depends on Fe(2+) as a cofactor.

It catalyses the reaction N-terminal N-formyl-L-methionyl-[peptide] + H2O = N-terminal L-methionyl-[peptide] + formate. Its function is as follows. Removes the formyl group from the N-terminal Met of newly synthesized proteins. Requires at least a dipeptide for an efficient rate of reaction. N-terminal L-methionine is a prerequisite for activity but the enzyme has broad specificity at other positions. In Clostridium perfringens (strain 13 / Type A), this protein is Peptide deformylase 1.